A 275-amino-acid polypeptide reads, in one-letter code: Diaminopimelate epimerase (275 aa).

Residues asparagine 12, glutamine 45, and asparagine 65 each coordinate substrate. Residue cysteine 74 is the Proton donor of the active site. Substrate-binding positions include 75 to 76 (GN), asparagine 158, asparagine 191, and 209 to 210 (ER). The active-site Proton acceptor is cysteine 218. 219 to 220 (GS) lines the substrate pocket.

It belongs to the diaminopimelate epimerase family. Homodimer.

The protein localises to the cytoplasm. It carries out the reaction (2S,6S)-2,6-diaminopimelate = meso-2,6-diaminopimelate. It functions in the pathway amino-acid biosynthesis; L-lysine biosynthesis via DAP pathway; DL-2,6-diaminopimelate from LL-2,6-diaminopimelate: step 1/1. In terms of biological role, catalyzes the stereoinversion of LL-2,6-diaminopimelate (L,L-DAP) to meso-diaminopimelate (meso-DAP), a precursor of L-lysine and an essential component of the bacterial peptidoglycan. This chain is Diaminopimelate epimerase, found in Shewanella amazonensis (strain ATCC BAA-1098 / SB2B).